The following is a 403-amino-acid chain: DNA primase DnaG (403 aa).

Residues 172 to 248 enclose the Toprim domain; that stretch reads DSVIIVEGRA…HIDYIARAPP (77 aa). Mg(2+) contacts are provided by Glu178, Asp222, and Asp224. Positions 279–300 are disordered; sequence AAGEKTEAPAQPTQQQPPPAEA.

This sequence belongs to the archaeal DnaG primase family. Forms a ternary complex with MCM helicase and DNA. Component of the archaeal exosome complex. Mg(2+) is required as a cofactor.

It catalyses the reaction ssDNA + n NTP = ssDNA/pppN(pN)n-1 hybrid + (n-1) diphosphate.. Its function is as follows. RNA polymerase that catalyzes the synthesis of short RNA molecules used as primers for DNA polymerase during DNA replication. Also part of the exosome, which is a complex involved in RNA degradation. Acts as a poly(A)-binding protein that enhances the interaction between heteromeric, adenine-rich transcripts and the exosome. The polypeptide is DNA primase DnaG (Pyrobaculum neutrophilum (strain DSM 2338 / JCM 9278 / NBRC 100436 / V24Sta) (Thermoproteus neutrophilus)).